A 336-amino-acid polypeptide reads, in one-letter code: Probable tRNA N6-adenosine threonylcarbamoyltransferase (336 aa).

3 residues coordinate a divalent metal cation: H110, H114, and Y131. Substrate-binding positions include 131–135, D163, G178, E182, and N267; that span reads YVSGG. Position 295 (D295) interacts with a divalent metal cation.

This sequence belongs to the KAE1 / TsaD family. As to quaternary structure, component of the EKC/KEOPS complex; the whole complex dimerizes. A divalent metal cation is required as a cofactor.

Its subcellular location is the cytoplasm. It localises to the nucleus. The enzyme catalyses L-threonylcarbamoyladenylate + adenosine(37) in tRNA = N(6)-L-threonylcarbamoyladenosine(37) in tRNA + AMP + H(+). Its function is as follows. Component of the EKC/KEOPS complex that is required for the formation of a threonylcarbamoyl group on adenosine at position 37 (t(6)A37) in tRNAs that read codons beginning with adenine. The complex is probably involved in the transfer of the threonylcarbamoyl moiety of threonylcarbamoyl-AMP (TC-AMP) to the N6 group of A37. Osgep likely plays a direct catalytic role in this reaction, but requires other protein(s) of the complex to fulfill this activity. The chain is Probable tRNA N6-adenosine threonylcarbamoyltransferase from Dictyostelium discoideum (Social amoeba).